The chain runs to 93 residues: uncharacterized protein (93 aa).

The helical transmembrane segment at V20–I40 threads the bilayer. Residue N78 is glycosylated (N-linked (GlcNAc...) asparagine; by host).

This sequence belongs to the asfivirus KP93L family.

The protein resides in the host membrane. This is an uncharacterized protein from Ornithodoros (relapsing fever ticks).